We begin with the raw amino-acid sequence, 75 residues long: UPF0154 protein MYPE400 (75 aa).

Residues Ile-5–Phe-27 form a helical membrane-spanning segment.

Belongs to the UPF0154 family.

It localises to the membrane. The chain is UPF0154 protein MYPE400 from Malacoplasma penetrans (strain HF-2) (Mycoplasma penetrans).